A 307-amino-acid chain; its full sequence is Acyl transferase (307 aa).

Active-site charge relay system residues include serine 116, aspartate 213, and histidine 243.

This sequence belongs to the LuxD family.

Its pathway is lipid metabolism; fatty acid reduction for biolumincescence. Functionally, acyl transferase is part of the fatty acid reductase system required for aldehyde biosynthesis; it produces fatty acids for the luminescent reaction. This is Acyl transferase from Photorhabdus luminescens (Xenorhabdus luminescens).